The sequence spans 362 residues: Sulfate/thiosulfate import ATP-binding protein CysA (362 aa).

One can recognise an ABC transporter domain in the interval 3-237 (IEIHDLSKQF…PANPFVYEFL (235 aa)). Position 35–42 (35–42 (GPSGSGKT)) interacts with ATP.

The protein belongs to the ABC transporter superfamily. Sulfate/tungstate importer (TC 3.A.1.6) family. In terms of assembly, the complex is composed of two ATP-binding proteins (CysA), two transmembrane proteins (CysT and CysW) and a solute-binding protein (CysP).

The protein resides in the cell inner membrane. It carries out the reaction sulfate(out) + ATP + H2O = sulfate(in) + ADP + phosphate + H(+). The catalysed reaction is thiosulfate(out) + ATP + H2O = thiosulfate(in) + ADP + phosphate + H(+). In terms of biological role, part of the ABC transporter complex CysAWTP involved in sulfate/thiosulfate import. Responsible for energy coupling to the transport system. This Nitrosomonas europaea (strain ATCC 19718 / CIP 103999 / KCTC 2705 / NBRC 14298) protein is Sulfate/thiosulfate import ATP-binding protein CysA.